The sequence spans 397 residues: Pectate lyase (397 aa).

Positions 1 to 25 are cleaved as a signal peptide; the sequence is MDVYRIRISVFFLLVLLTFAALTTA. Asn-134 carries an N-linked (GlcNAc...) asparagine glycan. Positions 191, 216, and 220 each coordinate Ca(2+). Residue Asn-227 is glycosylated (N-linked (GlcNAc...) asparagine). Residue Arg-272 is part of the active site.

The protein belongs to the polysaccharide lyase 1 family. It depends on Ca(2+) as a cofactor.

The enzyme catalyses Eliminative cleavage of (1-&gt;4)-alpha-D-galacturonan to give oligosaccharides with 4-deoxy-alpha-D-galact-4-enuronosyl groups at their non-reducing ends.. Its pathway is glycan metabolism; pectin degradation; 2-dehydro-3-deoxy-D-gluconate from pectin: step 2/5. This Nicotiana tabacum (Common tobacco) protein is Pectate lyase.